Reading from the N-terminus, the 1117-residue chain is Protocadherin-11 X-linked (1117 aa).

An N-terminal signal peptide occupies residues 1–23 (MDLLSGTHIFAVLLACIVFQSGA). Topologically, residues 24-812 (QEKNYTIREE…ASSPSSDYVK (789 aa)) are extracellular. Residues Asn-27 and Asn-48 are each glycosylated (N-linked (GlcNAc...) asparagine). Cadherin domains follow at residues 27–139 (NYTI…APLF), 140–249 (PATV…RPVF), 250–355 (KENE…IPSI), 362–466 (NPIN…APVF), 467–570 (TQPF…SPVF), 571–673 (THNE…KPVF), and 677–795 (SSNY…TPVT). N-linked (GlcNAc...) asparagine glycosylation occurs at Asn-344. An N-linked (GlcNAc...) asparagine glycan is attached at Asn-553. The chain crosses the membrane as a helical span at residues 813 to 833 (IVVAIVAGTITVILVIFITAV). Residues 834–1117 (VRCQQSPHLK…DGNSDPESGK (284 aa)) lie on the Cytoplasmic side of the membrane. Positions 1029–1039 (TVEIWTHPQPQ) are enriched in polar residues. The segment at 1029-1117 (TVEIWTHPQP…DGNSDPESGK (89 aa)) is disordered.

As to expression, expressed in adrenal gland, brain, heart, kidney, lung, prostate, skeletal muscle, testis and thymus.

It localises to the cell membrane. Functionally, potential calcium-dependent cell-adhesion protein. This is Protocadherin-11 X-linked (PCDH11X) from Sus scrofa (Pig).